The primary structure comprises 185 residues: MYSTTDFRRGLRIEIDGTPFEIVDFQHFKPGKGGAIVRTKMRNLLTGRIMDNNFRSGEKVGRPDMENRDMQFLYREDANLVFMDMTTYEQIYMPEETTEGKAGFLKEGQTIRVLLFNGTPLAIELPAALVLEVTETEPGAKGDTVSNVTKPATLETGIVIQVPIFVNQGDKVKVNTDTREYMGRE.

This sequence belongs to the elongation factor P family.

It is found in the cytoplasm. Its pathway is protein biosynthesis; polypeptide chain elongation. Functionally, involved in peptide bond synthesis. Stimulates efficient translation and peptide-bond synthesis on native or reconstituted 70S ribosomes in vitro. Probably functions indirectly by altering the affinity of the ribosome for aminoacyl-tRNA, thus increasing their reactivity as acceptors for peptidyl transferase. This Oleidesulfovibrio alaskensis (strain ATCC BAA-1058 / DSM 17464 / G20) (Desulfovibrio alaskensis) protein is Elongation factor P.